Reading from the N-terminus, the 121-residue chain is Probable intron-encoded DNA endonuclease aI1 (121 aa).

Belongs to the LAGLIDADG endonuclease family.

It localises to the mitochondrion. Its function is as follows. Mitochondrial DNA endonuclease involved in intron homing. The polypeptide is Probable intron-encoded DNA endonuclease aI1 (aI1) (Mycosarcoma maydis (Corn smut fungus)).